The sequence spans 416 residues: ABSCISIC ACID-INSENSITIVE 5-like protein 5 (416 aa).

The segment at 1-23 is disordered; it reads MDGSMNLGNEPPGDGGGGGGLTR. The segment covering 13 to 22 has biased composition (gly residues); the sequence is GDGGGGGGLT. Residues serine 26, serine 45, and serine 86 each carry the phosphoserine modification. Residue threonine 135 is modified to Phosphothreonine. The segment at 300–326 is disordered; the sequence is SEGIGKSNGDSSSLSPSPYMFNGGVRG. The bZIP domain maps to 336 to 399; that stretch reads VERRQRRMIK…KNQETEMRNL (64 aa). A basic motif region spans residues 338–357; that stretch reads RRQRRMIKNRESAARSRARK. Residues 364 to 385 are leucine-zipper; sequence LEAEVAKLKEENDELQRKQARI. Residues 388-416 form a disordered region; sequence MQKNQETEMRNLLQGGPKKKLRRTESGPW.

This sequence belongs to the bZIP family. ABI5 subfamily. In terms of assembly, DNA-binding heterodimer. Interacts with ARIA. The activation by phosphorylation is induced by abscisic acid (ABA). Phosphorylated by SRK2C, SRK2D, SRK2E, SRK2F and SRK2I in vitro. Expressed in roots, leaves, flowers and siliques but not in seeds.

The protein resides in the nucleus. In terms of biological role, involved in ABA and stress responses and acts as a positive component of glucose signal transduction. Functions as a transcriptional activator in the ABA-inducible expression of rd29B. Binds specifically to the ABA-responsive element (ABRE) of the rd29B gene promoter. In Arabidopsis thaliana (Mouse-ear cress), this protein is ABSCISIC ACID-INSENSITIVE 5-like protein 5 (ABF2).